A 207-amino-acid polypeptide reads, in one-letter code: MANILHIDSSPRGDRSISRKLSYEFITSWKDTHPGDTVTYRDLGHNPVPHVDEPWIAAAFSSPESHTPELKTAIELSDTLIDEFLAADRLVFGVPMYNLNIPSTFKAYIDQIVRAGKTFTVDANGYKGLVDSSKKVLIITSRGGSYPPGTPYAAYDYQEPYLRAILGFMGLTDVTFIHAESLNMGEDAREKSLAGAKDAIAQAVANW.

FMN-binding positions include Ser-10, 16-18 (SIS), 96-99 (MYNL), and 141-144 (SRGG).

Belongs to the azoreductase type 1 family. As to quaternary structure, homodimer. FMN serves as cofactor.

The enzyme catalyses 2 a quinone + NADH + H(+) = 2 a 1,4-benzosemiquinone + NAD(+). It carries out the reaction N,N-dimethyl-1,4-phenylenediamine + anthranilate + 2 NAD(+) = 2-(4-dimethylaminophenyl)diazenylbenzoate + 2 NADH + 2 H(+). Functionally, quinone reductase that provides resistance to thiol-specific stress caused by electrophilic quinones. Its function is as follows. Also exhibits azoreductase activity. Catalyzes the reductive cleavage of the azo bond in aromatic azo compounds to the corresponding amines. The protein is FMN-dependent NADH:quinone oxidoreductase of Nostoc sp. (strain PCC 7120 / SAG 25.82 / UTEX 2576).